The following is a 503-amino-acid chain: ATP synthase subunit alpha (503 aa).

170 to 177 (GDRKTGKT) contributes to the ATP binding site.

Belongs to the ATPase alpha/beta chains family. In terms of assembly, F-type ATPases have 2 components, CF(1) - the catalytic core - and CF(0) - the membrane proton channel. CF(1) has five subunits: alpha(3), beta(3), gamma(1), delta(1), epsilon(1). CF(0) has four main subunits: a(1), b(1), b'(1) and c(9-12).

The protein resides in the cellular thylakoid membrane. It catalyses the reaction ATP + H2O + 4 H(+)(in) = ADP + phosphate + 5 H(+)(out). In terms of biological role, produces ATP from ADP in the presence of a proton gradient across the membrane. The alpha chain is a regulatory subunit. The protein is ATP synthase subunit alpha of Synechocystis sp. (strain ATCC 27184 / PCC 6803 / Kazusa).